Here is a 690-residue protein sequence, read N- to C-terminus: Methionine--tRNA ligase (690 aa).

Residues 20–30 (PYANGSIHLGH) carry the 'HIGH' region motif. Zn(2+) is bound by residues cysteine 151, cysteine 154, cysteine 164, and cysteine 167. The 'KMSKS' region motif lies at 337–341 (KMSKS). Lysine 340 is a binding site for ATP. The tRNA-binding domain maps to 589 to 690 (DFAKVDLRIA…EGAQPGMRVM (102 aa)).

It belongs to the class-I aminoacyl-tRNA synthetase family. MetG type 1 subfamily. As to quaternary structure, homodimer. Zn(2+) serves as cofactor.

The protein resides in the cytoplasm. The catalysed reaction is tRNA(Met) + L-methionine + ATP = L-methionyl-tRNA(Met) + AMP + diphosphate. Is required not only for elongation of protein synthesis but also for the initiation of all mRNA translation through initiator tRNA(fMet) aminoacylation. The polypeptide is Methionine--tRNA ligase (Vibrio vulnificus (strain YJ016)).